We begin with the raw amino-acid sequence, 155 residues long: Endoribonuclease YbeY (155 aa).

Zn(2+) contacts are provided by His-114, His-118, and His-124.

The protein belongs to the endoribonuclease YbeY family. It depends on Zn(2+) as a cofactor.

It localises to the cytoplasm. In terms of biological role, single strand-specific metallo-endoribonuclease involved in late-stage 70S ribosome quality control and in maturation of the 3' terminus of the 16S rRNA. The chain is Endoribonuclease YbeY from Buchnera aphidicola subsp. Acyrthosiphon pisum (strain APS) (Acyrthosiphon pisum symbiotic bacterium).